The following is a 1339-amino-acid chain: Retrotransposon Gag-like protein 9 (1339 aa).

Composition is skewed to polar residues over residues 533–545 (TVPT…TQKT), 679–693 (SGTK…TTSG), and 700–711 (TRLSGPGATSTP). Disordered stretches follow at residues 533-555 (TVPT…PMST), 679-711 (SGTK…TSTP), 845-864 (GVMS…SRPQ), 880-901 (PATA…LSTL), 982-1010 (ATSL…GAGS), and 1078-1116 (ATDS…PPKE). Residues 891–901 (RSPASSTLSTL) are compositionally biased toward low complexity. Positions 1078–1106 (ATDSGEASTSHTRFTAPGSKSTPHMTSTA) are enriched in polar residues.

In Mus musculus (Mouse), this protein is Retrotransposon Gag-like protein 9.